A 124-amino-acid chain; its full sequence is Glycine cleavage system H protein (124 aa).

Residues 22 to 104 (KAKVGITDFA…YENGYLFIIE (83 aa)) form the Lipoyl-binding domain. Lys-63 carries the post-translational modification N6-lipoyllysine.

The protein belongs to the GcvH family. In terms of assembly, the glycine cleavage system is composed of four proteins: P, T, L and H. (R)-lipoate serves as cofactor.

The glycine cleavage system catalyzes the degradation of glycine. The H protein shuttles the methylamine group of glycine from the P protein to the T protein. In Endomicrobium trichonymphae, this protein is Glycine cleavage system H protein.